A 194-amino-acid chain; its full sequence is UPF0215 protein PF2042 (194 aa).

This sequence belongs to the UPF0215 family.

The chain is UPF0215 protein PF2042 from Pyrococcus furiosus (strain ATCC 43587 / DSM 3638 / JCM 8422 / Vc1).